The chain runs to 405 residues: Tryptophan synthase beta chain (405 aa).

Lys98 is subject to N6-(pyridoxal phosphate)lysine.

Belongs to the TrpB family. As to quaternary structure, tetramer of two alpha and two beta chains. The cofactor is pyridoxal 5'-phosphate.

It carries out the reaction (1S,2R)-1-C-(indol-3-yl)glycerol 3-phosphate + L-serine = D-glyceraldehyde 3-phosphate + L-tryptophan + H2O. The protein operates within amino-acid biosynthesis; L-tryptophan biosynthesis; L-tryptophan from chorismate: step 5/5. Functionally, the beta subunit is responsible for the synthesis of L-tryptophan from indole and L-serine. In Xanthomonas euvesicatoria pv. vesicatoria (strain 85-10) (Xanthomonas campestris pv. vesicatoria), this protein is Tryptophan synthase beta chain.